The primary structure comprises 541 residues: Glutamine-dependent NAD(+) synthetase (541 aa).

The CN hydrolase domain maps to 4 to 243 (FKIALAQFSP…EELYYSEFDI (240 aa)). The Proton acceptor; for glutaminase activity role is filled by Glu-44. Lys-111 acts as the For glutaminase activity in catalysis. Position 117 (Tyr-117) interacts with L-glutamine. Catalysis depends on Cys-147, which acts as the Nucleophile; for glutaminase activity. Ser-173 and Lys-179 together coordinate L-glutamine. 286–293 (GLSGGIDS) lines the ATP pocket. Asn-369 contributes to the deamido-NAD(+) binding site. Thr-393 is a binding site for ATP. The deamido-NAD(+) site is built by Glu-398 and Lys-510.

The protein in the C-terminal section; belongs to the NAD synthetase family.

The enzyme catalyses deamido-NAD(+) + L-glutamine + ATP + H2O = L-glutamate + AMP + diphosphate + NAD(+) + H(+). Its pathway is cofactor biosynthesis; NAD(+) biosynthesis; NAD(+) from deamido-NAD(+) (L-Gln route): step 1/1. Catalyzes the ATP-dependent amidation of deamido-NAD to form NAD. Uses L-glutamine as a nitrogen source. In vitro, can also use ammonia as donor with comparable specific activity, but cannot use nicotinate mononucleotide (NaMN) as substrate. In Acinetobacter baylyi (strain ATCC 33305 / BD413 / ADP1), this protein is Glutamine-dependent NAD(+) synthetase.